A 163-amino-acid polypeptide reads, in one-letter code: UPF0763 protein JJD26997_0796 (163 aa).

It belongs to the UPF0763 family.

This is UPF0763 protein JJD26997_0796 from Campylobacter jejuni subsp. doylei (strain ATCC BAA-1458 / RM4099 / 269.97).